The following is a 571-amino-acid chain: uncharacterized protein (571 aa).

A run of 5 helical transmembrane segments spans residues 10–29 (VRLHPELALFAAIVFGHFIG), 36–55 (VSLGTVVGTLIAGMILGLLF), 65–87 (WAFFDLFLFAVGYSAGPQFFASL), 96–118 (ALAVVVSCTGLAAAIAMVALFRF), and 166–188 (ATTYIFGEVGLILFVTVVAPRLL). In terms of domain architecture, RCK C-terminal spans 294 to 378 (TEVDDQELLS…IATAARNLGF (85 aa)). Helical transmembrane passes span 388–406 (LVYLAGGVVVGILFGLLQV), 411–433 (VPLGLGTSGGVLVVGLVAGWLYS), 446–465 (LRLLSDVGLIVFIAAIGLAA), 480–502 (LFAKLVGAGVVVTLAGPIAGLLL), 509–531 (LPPIALLPGIAGAQTTVATLNAL), and 546–568 (VPFAVSNVLITLWGPVIVACAVA).

It belongs to the AAE transporter (TC 2.A.81) family.

It is found in the cell membrane. This is an uncharacterized protein from Bordetella bronchiseptica (strain ATCC BAA-588 / NCTC 13252 / RB50) (Alcaligenes bronchisepticus).